The chain runs to 315 residues: Ribosomal RNA small subunit methyltransferase H (315 aa).

S-adenosyl-L-methionine-binding positions include 34-36, aspartate 53, aspartate 100, and histidine 107; that span reads GGH.

Belongs to the methyltransferase superfamily. RsmH family.

The protein resides in the cytoplasm. The catalysed reaction is cytidine(1402) in 16S rRNA + S-adenosyl-L-methionine = N(4)-methylcytidine(1402) in 16S rRNA + S-adenosyl-L-homocysteine + H(+). Specifically methylates the N4 position of cytidine in position 1402 (C1402) of 16S rRNA. This chain is Ribosomal RNA small subunit methyltransferase H, found in Treponema denticola (strain ATCC 35405 / DSM 14222 / CIP 103919 / JCM 8153 / KCTC 15104).